Reading from the N-terminus, the 41-residue chain is MKIKNSLKALRERHRNNRMVRRKGRVYILNKTNPRFRARQG.

It belongs to the bacterial ribosomal protein bL36 family.

This chain is Large ribosomal subunit protein bL36, found in Bartonella quintana (strain Toulouse) (Rochalimaea quintana).